Consider the following 398-residue polypeptide: Secreted aspartic protease 2 (398 aa).

The signal sequence occupies residues 1–18 (MFLKNIFIALAIALLVDA). A propeptide spans 19 to 56 (TPTTTKRSAGFVALDFSVVKTPKAFPVTNGQEGKTSKR) (activation peptide). In terms of domain architecture, Peptidase A1 spans 70-384 (YAADITVGSN…DLDDNEISLA (315 aa)). Asp-88 is an active-site residue. Residue 88 to 90 (DTG) participates in pepstatin A binding. Residues Cys-103 and Cys-115 are joined by a disulfide bond. Position 141-142 (141-142 (GD)) interacts with pepstatin A. Residues Asp-247 and Asp-270 each contribute to the Zn(2+) site. Asp-274 is a catalytic residue. Residue 274-278 (DSGTT) participates in pepstatin A binding. Cysteines 312 and 350 form a disulfide. Asn-313 and Asn-321 each carry an N-linked (GlcNAc...) asparagine glycan.

This sequence belongs to the peptidase A1 family. In terms of assembly, monomer.

The protein localises to the secreted. The enzyme catalyses Preferential cleavage at the carboxyl of hydrophobic amino acids, but fails to cleave 15-Leu-|-Tyr-16, 16-Tyr-|-Leu-17 and 24-Phe-|-Phe-25 of insulin B chain. Activates trypsinogen, and degrades keratin.. Functionally, secreted aspartic peptidases (SAPs) are a group of ten acidic hydrolases considered as key virulence factors. These enzymes supply the fungus with nutrient amino acids as well as are able to degrade the selected host's proteins involved in the immune defense. Induces host inflammatory cytokine production in a proteolytic activity-independent way. Plays a role in tissue damage during superficial infection. Moreover, acts toward human hemoglobin though limited proteolysis to generate a variety of antimicrobial hemocidins, enabling to compete with the other microorganisms of the same physiological niche using the microbicidal peptides generated from the host protein. Its function is as follows. Plays a key role in defense against host by cleaving histatin-5 (Hst 5), a peptide from human saliva that carries out fungicidal activity. The cleavage rate decreases in an order of SAP2 &gt; SAP9 &gt; SAP3 &gt; SAP7 &gt; SAP4 &gt; SAP1 &gt; SAP8. The first cleavage occurs between residues 'Lys-17' and 'His-18' of Hst 5, giving DSHAKRHHGYKRKFHEK and HHSHRGY peptides. Simultaneously, the DSHAKRHHGYKRK peptide is also formed. Further fragmentation by SAP2 results in FHEK and DSHAKRHHGY products. The chain is Secreted aspartic protease 2 from Candida albicans (Yeast).